The primary structure comprises 67 residues: Large ribosomal subunit protein bL32 (67 aa).

A compositionally biased stretch (basic residues) spans 1-19 (MAVPKRKMSRANTRARRSQ). Residues 1-21 (MAVPKRKMSRANTRARRSQWK) form a disordered region.

Belongs to the bacterial ribosomal protein bL32 family.

This Micrococcus luteus (strain ATCC 4698 / DSM 20030 / JCM 1464 / CCM 169 / CCUG 5858 / IAM 1056 / NBRC 3333 / NCIMB 9278 / NCTC 2665 / VKM Ac-2230) (Micrococcus lysodeikticus) protein is Large ribosomal subunit protein bL32.